A 123-amino-acid chain; its full sequence is Large ribosomal subunit protein bL12 (123 aa).

The protein belongs to the bacterial ribosomal protein bL12 family. In terms of assembly, homodimer. Part of the ribosomal stalk of the 50S ribosomal subunit. Forms a multimeric L10(L12)X complex, where L10 forms an elongated spine to which 2 to 4 L12 dimers bind in a sequential fashion. Binds GTP-bound translation factors.

Forms part of the ribosomal stalk which helps the ribosome interact with GTP-bound translation factors. Is thus essential for accurate translation. In Clostridium kluyveri (strain NBRC 12016), this protein is Large ribosomal subunit protein bL12.